The following is a 647-amino-acid chain: ATP-binding protein Uup (647 aa).

2 consecutive ABC transporter domains span residues 1 to 253 and 320 to 546; these read MALI…RVEA and FEME…AKAK. ATP contacts are provided by residues 36 to 43 and 352 to 359; these read GRNGAGKS and GPNGCGKT. Residues 545–563 are compositionally biased toward basic and acidic residues; the sequence is AKKSEPLKEESAVKNDRTS. A disordered region spans residues 545–569; that stretch reads AKKSEPLKEESAVKNDRTSKPKSVK. A C-terminal domain (CTD), binds DNA region spans residues 559 to 647; it reads NDRTSKPKSV…EKKNLVEGKA (89 aa).

This sequence belongs to the ABC transporter superfamily. ABCF family. Uup subfamily.

It is found in the cytoplasm. It carries out the reaction ATP + H2O = ADP + phosphate + H(+). Probably plays a role in ribosome assembly or function. May be involved in resolution of branched DNA intermediates that result from template switching in postreplication gaps. Binds DNA and has ATPase activity. The chain is ATP-binding protein Uup from Haemophilus influenzae (strain ATCC 51907 / DSM 11121 / KW20 / Rd).